A 359-amino-acid chain; its full sequence is Magnesium transporter NIPA2 (359 aa).

Over 1–9 (MSLGRGKYD) the chain is Extracellular. The helical transmembrane segment at 10-30 (FYIGLGLAMTSSIFIGGSFIL) threads the bilayer. The Cytoplasmic portion of the chain corresponds to 31 to 56 (KKKGLLRLARKGSMRAGQGGHAYLKE). A helical membrane pass occupies residues 57–77 (WLWWAGLLSMGAGEVANFAAY). Residue A78 is a topological domain, extracellular. A helical transmembrane segment spans residues 79–99 (FAPATLVTPLGALSVLVSAIL). The Cytoplasmic portion of the chain corresponds to 100 to 107 (SSYFLNER). Residues 108 to 128 (LNLHGKIGCLLSILGSTVMVI) form a helical membrane-spanning segment. Topologically, residues 129 to 149 (HAPKEEEIETLNEMSHKLGDP) are extracellular. A helical transmembrane segment spans residues 150–170 (GFVVFATFVVIVALIFIFVVG). Topologically, residues 171–175 (PRHGQ) are cytoplasmic. The chain crosses the membrane as a helical span at residues 176-196 (TNILVYITICSVIGAFSVSCV). Topologically, residues 197-215 (KGLGIAIKELLAGKPVLQH) are extracellular. Residues 216–236 (PLAWILLFSLVVCVSTQINYL) form a helical membrane-spanning segment. The Cytoplasmic portion of the chain corresponds to 237-246 (NRALDIFNTS). A helical transmembrane segment spans residues 247–267 (IVTPIYYVFFTTSVLTCSAIL). Topologically, residues 268–278 (FKEWQDMPVDD) are extracellular. Residues 279-299 (VIGTLSGFFTIIVGIFLLHAF) form a helical membrane-spanning segment. Topologically, residues 300–359 (KDVSFSLASLPVSFRKDEKAMNGNLSSMYEVLNNNEDDLPCGIEHTGENISRRNGNLPSF) are cytoplasmic.

It belongs to the NIPA family. As to expression, widely expressed. Expressed at high levels in the kidney.

It localises to the cell membrane. It is found in the early endosome. The catalysed reaction is Mg(2+)(in) = Mg(2+)(out). Its function is as follows. Acts as a selective Mg(2+) transporter. The polypeptide is Magnesium transporter NIPA2 (Nipa2) (Mus musculus (Mouse)).